Here is a 436-residue protein sequence, read N- to C-terminus: Histidinol dehydrogenase (436 aa).

The substrate site is built by S237, Q259, and H262. The Zn(2+) site is built by Q259 and H262. Active-site proton acceptor residues include E327 and H328. The substrate site is built by H328, D361, E415, and H420. Residue D361 coordinates Zn(2+). Residue H420 coordinates Zn(2+).

The protein belongs to the histidinol dehydrogenase family. It depends on Zn(2+) as a cofactor.

It catalyses the reaction L-histidinol + 2 NAD(+) + H2O = L-histidine + 2 NADH + 3 H(+). It functions in the pathway amino-acid biosynthesis; L-histidine biosynthesis; L-histidine from 5-phospho-alpha-D-ribose 1-diphosphate: step 9/9. Functionally, catalyzes the sequential NAD-dependent oxidations of L-histidinol to L-histidinaldehyde and then to L-histidine. This chain is Histidinol dehydrogenase, found in Helicobacter hepaticus (strain ATCC 51449 / 3B1).